The following is a 174-amino-acid chain: MNNDNDDSIEIIGGVDPRTMATRGEDESRDSDEPSLTDLVEQPAKVMRIGTMIKQLLEEVRAAPLDEASRNQLREIHATSIRELEDGLAPELREELDRLTLPFNESTAPSNAELRIAQAQLVGWLEGLFHGIQTALFAQQMAARAQLEQMRHSALPPGMGKPGQAGGQGTGQYL.

Disordered regions lie at residues 1-37 (MNNDNDDSIEIIGGVDPRTMATRGEDESRDSDEPSLT) and 153-174 (SALPPGMGKPGQAGGQGTGQYL). Over residues 160-174 (GKPGQAGGQGTGQYL) the composition is skewed to gly residues. The short motif at 172–174 (QYL) is the HbYX motif element.

The protein belongs to the Bpa family. Forms a homooligomeric, either hexameric or heptameric, ring-like structure which stacks co-axially with the proteasomal alpha-rings.

Its function is as follows. Interacts with the core proteasome alpha-subunit (PrcA) through its C-terminal hydrophobic-tyrosine-X motif (HbYX motif). Interaction of Bpa with the proteasome stimulates proteasomal peptidase and casein degradation activity, which suggests Bpa could play a role in the removal of non-native or damaged proteins by influencing the conformation of the proteasome complex upon interaction. This chain is Bacterial proteasome activator (bpa), found in Mycobacterium leprae (strain TN).